Consider the following 808-residue polypeptide: MAYDHKSIEAKWQKYWDEHETFRAPDKSEKEKYYVMDMFPYPSGQGLHVGHPEGYTATDIMSRYKRAKGFNVLHPMGWDAFGLPAEQYAIKTGNNPAGFTNKNVQVFKNQIKSLGFSIDWSREINTTDPEYYKWSQWIFEKLYEKGLAYEDEIMVNWAPDFPGGGIVVANEEVIDGKTERGGYPVYRKPMKQWVLRITAYADRLLEDLEDLDWPEAIKEQQRHWIGKSIGASVFFNIADSDKQIEVYTTRPDTLFGAQYMVLSPEHELVDEITTLEQKEAIANYKKEVETKSDLERTDLNKDKTGAFTGAYATNPINGEKLPIWIADYVLSSYGTGAIMAVPAHDDRDWEFAKKFNLPIKAVIEGGNVEEAAYTDDGTHINSGFLDGLNKQEAIDKAISWLEEHNAGHQQINYRLRDWIFSRQRYWGEPIPVIHWEDGTQTLVPESELPLRLPEMTQEQLKPSGTGESPLANATDWLNVTRKDGVKGRRETNTMPQWAGSSWYFLRYVDPHNSEALADPEKLKYWMNVDLYVGGAEHAVLHLLYARFWHKFLYDLGVVPTKEPFQKLVNQGMILGENHEKMSKSKGNVVNPDEIVNNYGADTLRVYEMFMGPLTQSKPWSEDGVSGSRRWLDRVWRLLVDEEDKLRDHVTTVNKGDLDKIYHQTVKKVSEDLENMRFNTAISQLMVFVNEAYKSEALPVQYMDGFVQMLAPIAPHLAEELWSKLGHEEDISYVSWPTYDESQLVEDSVEIIFQVNGKVRGKATVARNIDKDAMLDYAKADENVQNFISGKEIRKIIAIPGKFVNIVVG.

Positions 40-51 match the 'HIGH' region motif; the sequence is PYPSGQGLHVGH. A 'KMSKS' region motif is present at residues 580–584; it reads KMSKS. Lys-583 lines the ATP pocket.

Belongs to the class-I aminoacyl-tRNA synthetase family.

The protein resides in the cytoplasm. It catalyses the reaction tRNA(Leu) + L-leucine + ATP = L-leucyl-tRNA(Leu) + AMP + diphosphate. In Leuconostoc mesenteroides subsp. mesenteroides (strain ATCC 8293 / DSM 20343 / BCRC 11652 / CCM 1803 / JCM 6124 / NCDO 523 / NBRC 100496 / NCIMB 8023 / NCTC 12954 / NRRL B-1118 / 37Y), this protein is Leucine--tRNA ligase.